We begin with the raw amino-acid sequence, 738 residues long: Exocyst complex component 3 (738 aa).

The stretch at 28-91 (LEKVEQYRHR…DEVERLLRGV (64 aa)) forms a coiled coil.

This sequence belongs to the SEC6 family. In terms of assembly, the exocyst complex is composed of Sec3/Exoc1, Sec5/Exoc2, Sec6/Exoc3, Sec8/Exoc4, Sec10/Exoc5, Sec15/Exoc6, Exo70/Exoc7 and Exo84/Exoc8.

Its function is as follows. Component of the exocyst complex involved in the docking of exocytic vesicles with fusion sites on the plasma membrane. This Drosophila melanogaster (Fruit fly) protein is Exocyst complex component 3.